Consider the following 212-residue polypeptide: DNA-directed RNA polymerase III subunit RPC8 (212 aa).

Phosphoserine is present on Ser-162. The span at 166–184 (RELEERAQLENEIEGKNEE) shows a compositional bias: basic and acidic residues. Positions 166–194 (RELEERAQLENEIEGKNEETPQNEKPPAY) are disordered.

This sequence belongs to the eukaryotic RPB7/RPC8 RNA polymerase subunit family. As to quaternary structure, component of the RNA polymerase III (Pol III) complex consisting of 17 subunits. RPC25/RPC8 and RPC17/RPC9 form a Pol III subcomplex.

The protein resides in the nucleus. In terms of biological role, DNA-dependent RNA polymerase catalyzes the transcription of DNA into RNA using the four ribonucleoside triphosphates as substrates. Specific peripheric component of RNA polymerase III which synthesizes small RNAs, such as 5S rRNA and tRNA. The RPC25/RPC8-RPC17/RPC9 subcomplex may bind Pol III transcripts emerging from the adjacent exit pore during elongation. The protein is DNA-directed RNA polymerase III subunit RPC8 (RPC25) of Saccharomyces cerevisiae (strain ATCC 204508 / S288c) (Baker's yeast).